Consider the following 365-residue polypeptide: Aminomethyltransferase (365 aa).

The protein belongs to the GcvT family. The glycine cleavage system is composed of four proteins: P, T, L and H.

It catalyses the reaction N(6)-[(R)-S(8)-aminomethyldihydrolipoyl]-L-lysyl-[protein] + (6S)-5,6,7,8-tetrahydrofolate = N(6)-[(R)-dihydrolipoyl]-L-lysyl-[protein] + (6R)-5,10-methylene-5,6,7,8-tetrahydrofolate + NH4(+). Functionally, the glycine cleavage system catalyzes the degradation of glycine. The chain is Aminomethyltransferase from Aeromonas salmonicida (strain A449).